We begin with the raw amino-acid sequence, 466 residues long: Probable periplasmic serine protease do/HhoA-like (466 aa).

Residues 1–29 form the signal peptide; the sequence is MKKTRFVLNSIALGLSVLSTSFVAHVAQA. Catalysis depends on charge relay system residues H120, D150, and S226. PDZ domains follow at residues 270-361 and 367-458; these read ILEF…LRDG and KMKL…LRGD.

The protein belongs to the peptidase S1C family.

Its subcellular location is the periplasm. The sequence is that of Probable periplasmic serine protease do/HhoA-like from Haemophilus influenzae (strain ATCC 51907 / DSM 11121 / KW20 / Rd).